Reading from the N-terminus, the 172-residue chain is Endoribonuclease YbeY (172 aa).

Residues His134, His138, and His144 each coordinate Zn(2+).

The protein belongs to the endoribonuclease YbeY family. It depends on Zn(2+) as a cofactor.

The protein localises to the cytoplasm. In terms of biological role, single strand-specific metallo-endoribonuclease involved in late-stage 70S ribosome quality control and in maturation of the 3' terminus of the 16S rRNA. In Burkholderia cenocepacia (strain HI2424), this protein is Endoribonuclease YbeY.